The sequence spans 430 residues: Histidine--tRNA ligase (430 aa).

The protein belongs to the class-II aminoacyl-tRNA synthetase family. Homodimer.

It is found in the cytoplasm. It catalyses the reaction tRNA(His) + L-histidine + ATP = L-histidyl-tRNA(His) + AMP + diphosphate + H(+). This is Histidine--tRNA ligase from Acaryochloris marina (strain MBIC 11017).